We begin with the raw amino-acid sequence, 23 residues long: Potassium channel toxin kappa-KTx 2.3 (23 aa).

Cystine bridges form between Cys-4-Cys-22 and Cys-8-Cys-18.

The protein belongs to the short scorpion toxin superfamily. Potassium channel inhibitor kappa-KTx family. Kappa-KTx 2 subfamily. In terms of tissue distribution, expressed by the venom gland.

Its subcellular location is the secreted. In terms of biological role, decreases the amplitude of the potassium current of the rat channels Kv1.1/KCNA1 by 33% and Kv1.2/KCNA2 by 8% as well as human Kv1.3/KCNA3 by 70%. The chain is Potassium channel toxin kappa-KTx 2.3 from Opisthacanthus madagascariensis (Scorpion).